The primary structure comprises 215 residues: 3-isopropylmalate dehydratase small subunit (215 aa).

This sequence belongs to the LeuD family. LeuD type 1 subfamily. As to quaternary structure, heterodimer of LeuC and LeuD.

The enzyme catalyses (2R,3S)-3-isopropylmalate = (2S)-2-isopropylmalate. Its pathway is amino-acid biosynthesis; L-leucine biosynthesis; L-leucine from 3-methyl-2-oxobutanoate: step 2/4. Its function is as follows. Catalyzes the isomerization between 2-isopropylmalate and 3-isopropylmalate, via the formation of 2-isopropylmaleate. This chain is 3-isopropylmalate dehydratase small subunit, found in Chromohalobacter salexigens (strain ATCC BAA-138 / DSM 3043 / CIP 106854 / NCIMB 13768 / 1H11).